The sequence spans 387 residues: Putative purine permease 15 (387 aa).

10 helical membrane-spanning segments follow: residues 44-64 (WVTI…ARLL), 84-104 (TLLQ…HFLI), 122-142 (LAIT…FSDV), 150-169 (VFTL…SKYY), 179-199 (FISL…FSAG), 210-230 (YGII…LCII), 252-272 (FVVV…ILVA), 306-326 (VAWQ…SAVF), 329-349 (VISV…YNTH), and 354-374 (VFRG…IYII).

This sequence belongs to the purine permeases (TC 2.A.7.14) family.

It is found in the membrane. This Arabidopsis thaliana (Mouse-ear cress) protein is Putative purine permease 15 (PUP15).